The sequence spans 103 residues: Large ribosomal subunit protein bL21 (103 aa).

This sequence belongs to the bacterial ribosomal protein bL21 family. Part of the 50S ribosomal subunit. Contacts protein L20.

This protein binds to 23S rRNA in the presence of protein L20. In Clostridium acetobutylicum (strain ATCC 824 / DSM 792 / JCM 1419 / IAM 19013 / LMG 5710 / NBRC 13948 / NRRL B-527 / VKM B-1787 / 2291 / W), this protein is Large ribosomal subunit protein bL21.